Consider the following 679-residue polypeptide: Cysteine-rich receptor-like protein kinase 29 (679 aa).

The signal sequence occupies residues 1 to 23 (MEHVRVIFFFACFLTLAPFHAFA). Topologically, residues 24–286 (QVDSYEFDPD…RTGKGKGGSK (263 aa)) are extracellular. 2 consecutive Gnk2-homologous domains span residues 30–134 (FDPD…NRTI) and 140–249 (TNPT…TWRF). N-linked (GlcNAc...) asparagine glycans are attached at residues Asn41, Asn45, Asn71, Asn107, Asn131, and Asn187. Residues 260 to 281 (PPAIQPADSPQSAARTERTGKG) are disordered. Residues 287–307 (VIIAIVIPILLVALLAICLCL) traverse the membrane as a helical segment. At 308–679 (VLKWRKNKSG…DVTVSEFSPR (372 aa)) the chain is on the cytoplasmic side. Positions 357-637 (FSSENELGRG…SLMLNSYSFT (281 aa)) constitute a Protein kinase domain. ATP contacts are provided by residues 363–371 (LGRGGFGSV) and Lys385. The residue at position 430 (Tyr430) is a Phosphotyrosine. Asp482 functions as the Proton acceptor in the catalytic mechanism. Ser486 carries the post-translational modification Phosphoserine. Thr524 is subject to Phosphothreonine. The residue at position 532 (Tyr532) is a Phosphotyrosine. A disordered region spans residues 659–679 (SSTEGLQMSSNDVTVSEFSPR).

The protein belongs to the protein kinase superfamily. Ser/Thr protein kinase family. CRK subfamily.

It is found in the membrane. It carries out the reaction L-seryl-[protein] + ATP = O-phospho-L-seryl-[protein] + ADP + H(+). It catalyses the reaction L-threonyl-[protein] + ATP = O-phospho-L-threonyl-[protein] + ADP + H(+). The polypeptide is Cysteine-rich receptor-like protein kinase 29 (CRK29) (Arabidopsis thaliana (Mouse-ear cress)).